Reading from the N-terminus, the 212-residue chain is Acyl-homoserine-lactone synthase (212 aa).

The protein belongs to the autoinducer synthase family.

It carries out the reaction a fatty acyl-[ACP] + S-adenosyl-L-methionine = an N-acyl-L-homoserine lactone + S-methyl-5'-thioadenosine + holo-[ACP] + H(+). In terms of biological role, required for the synthesis of OHHL (N-(3-oxohexanoyl)-L-homoserine lactone), an autoinducer molecule which binds to TraR and thus acts in the control of conjugal transfer. The chain is Acyl-homoserine-lactone synthase (traI) from Rhizobium radiobacter (Agrobacterium tumefaciens).